The sequence spans 338 residues: Glyceraldehyde-3-phosphate dehydrogenase (338 aa).

NAD(+) is bound by residues 12-13, aspartate 34, and arginine 79; that span reads RI. D-glyceraldehyde 3-phosphate contacts are provided by residues 150–152, threonine 181, 210–211, and arginine 233; these read SCT and TG. The Nucleophile role is filled by cysteine 151. Residue asparagine 316 participates in NAD(+) binding.

It belongs to the glyceraldehyde-3-phosphate dehydrogenase family. Homotetramer.

The protein localises to the cytoplasm. The enzyme catalyses D-glyceraldehyde 3-phosphate + phosphate + NAD(+) = (2R)-3-phospho-glyceroyl phosphate + NADH + H(+). It functions in the pathway carbohydrate degradation; glycolysis; pyruvate from D-glyceraldehyde 3-phosphate: step 1/5. The sequence is that of Glyceraldehyde-3-phosphate dehydrogenase (GPD) from Phaffia rhodozyma (Yeast).